The following is a 231-amino-acid chain: MIP18 family protein YHR122W (231 aa).

Disordered regions lie at residues 1–26 and 75–100; these read MSEF…DSTK and LTSD…EEEE. Ser2 carries the N-acetylserine modification. Residues 76 to 90 show a composition bias toward acidic residues; that stretch reads TSDEDSLPAESEDES.

It belongs to the MIP18 family.

Functionally, may play a role in chromosome segregation through establishment of sister chromatid cohesion. The chain is MIP18 family protein YHR122W from Saccharomyces cerevisiae (strain ATCC 204508 / S288c) (Baker's yeast).